A 79-amino-acid chain; its full sequence is Acyl carrier protein (79 aa).

The region spanning 2-77 is the Carrier domain; it reads SDTAERVKKI…DAIDFINQKT (76 aa). Residue Ser-37 is modified to O-(pantetheine 4'-phosphoryl)serine.

The protein belongs to the acyl carrier protein (ACP) family. 4'-phosphopantetheine is transferred from CoA to a specific serine of apo-ACP by AcpS. This modification is essential for activity because fatty acids are bound in thioester linkage to the sulfhydryl of the prosthetic group.

It localises to the cytoplasm. The protein operates within lipid metabolism; fatty acid biosynthesis. Functionally, carrier of the growing fatty acid chain in fatty acid biosynthesis. In Rhodospirillum centenum (strain ATCC 51521 / SW), this protein is Acyl carrier protein.